Here is a 178-residue protein sequence, read N- to C-terminus: Peptide methionine sulfoxide reductase MsrA (178 aa).

The active site involves Cys12.

This sequence belongs to the MsrA Met sulfoxide reductase family.

The enzyme catalyses L-methionyl-[protein] + [thioredoxin]-disulfide + H2O = L-methionyl-(S)-S-oxide-[protein] + [thioredoxin]-dithiol. The catalysed reaction is [thioredoxin]-disulfide + L-methionine + H2O = L-methionine (S)-S-oxide + [thioredoxin]-dithiol. In terms of biological role, has an important function as a repair enzyme for proteins that have been inactivated by oxidation. Catalyzes the reversible oxidation-reduction of methionine sulfoxide in proteins to methionine. The chain is Peptide methionine sulfoxide reductase MsrA from Erwinia tasmaniensis (strain DSM 17950 / CFBP 7177 / CIP 109463 / NCPPB 4357 / Et1/99).